The primary structure comprises 453 residues: Ribosomal protein uS12 methylthiotransferase RimO (453 aa).

Residues 9 to 124 enclose the MTTase N-terminal domain; that stretch reads PKIGFVSLGC…VMDAVHKHMP (116 aa). Residues C18, C54, C83, C155, C159, and C162 each contribute to the [4Fe-4S] cluster site. Residues 141–382 enclose the Radical SAM core domain; the sequence is LTPKHFAYLK…MLLQEEISKK (242 aa). Residues 385–453 form the TRAM domain; the sequence is QAKVGKTMRV…ADAHDLWAEA (69 aa).

The protein belongs to the methylthiotransferase family. RimO subfamily. Requires [4Fe-4S] cluster as cofactor.

The protein localises to the cytoplasm. The enzyme catalyses L-aspartate(89)-[ribosomal protein uS12]-hydrogen + (sulfur carrier)-SH + AH2 + 2 S-adenosyl-L-methionine = 3-methylsulfanyl-L-aspartate(89)-[ribosomal protein uS12]-hydrogen + (sulfur carrier)-H + 5'-deoxyadenosine + L-methionine + A + S-adenosyl-L-homocysteine + 2 H(+). Catalyzes the methylthiolation of an aspartic acid residue of ribosomal protein uS12. In Janthinobacterium sp. (strain Marseille) (Minibacterium massiliensis), this protein is Ribosomal protein uS12 methylthiotransferase RimO.